Here is a 616-residue protein sequence, read N- to C-terminus: Chaperone protein HscA (616 aa).

It belongs to the heat shock protein 70 family.

Chaperone involved in the maturation of iron-sulfur cluster-containing proteins. Has a low intrinsic ATPase activity which is markedly stimulated by HscB. Involved in the maturation of IscU. The protein is Chaperone protein HscA of Salmonella arizonae (strain ATCC BAA-731 / CDC346-86 / RSK2980).